Here is a 323-residue protein sequence, read N- to C-terminus: Solute carrier family 35 member B1 (323 aa).

Helical transmembrane passes span 15 to 35 (LVCFLGVFVCYFYYGILQETI), 51 to 71 (FALSLVFVQCIVNALFAKLLI), 85 to 105 (WLYAACSLSYLGAMVSSNSAL), 136 to 156 (YPLSKYLCVLLIVLGVALFMY), 169 to 189 (TFGYGELLLLLSLTLDGLTGV), 205 to 225 (MMLYINLWSSLFLGAGIVFTG), 253 to 273 (LGQTFIFMTVVYFGPLTCSII), and 286 to 306 (VILFSNPISSIQWVGTILVFL). A Di-lysine motif motif is present at residues 319-323 (KKPSH).

Belongs to the nucleotide-sugar transporter family. SLC35B subfamily.

It localises to the endoplasmic reticulum membrane. In terms of biological role, probable sugar transporter. The chain is Solute carrier family 35 member B1 (slc35b1) from Xenopus tropicalis (Western clawed frog).